Consider the following 592-residue polypeptide: Bifunctional purine biosynthesis protein ATIC (592 aa).

Position 1 is an N-acetylmethionine (methionine 1). The MGS-like domain maps to 1-146 (MAPGHLALFS…KNHARVTVVC (146 aa)). Residues 1–198 (MAPGHLALFS…ISDYFRKQYS (198 aa)) are IMP cyclohydrolase. IMP-binding positions include 12-14 (SDK), 34-37 (SGGT), 64-67 (RVKT), 101-102 (CN), and 125-126 (DI). The active-site Proton donor/acceptor; for FAICAR cyclization activity is the lysine 137. Residue lysine 199 is modified to N6-acetyllysine. Positions 199–592 (KGISQMPLRY…AHTNLRLFHH (394 aa)) are AICAR formyltransferase. 5-amino-1-(5-phospho-beta-D-ribosyl)imidazole-4-carboxamide-binding positions include 207–208 (RY), histidine 267, glycine 316, aspartate 339, asparagine 431, and arginine 451. The active-site Proton acceptor; for AICAR formyltransferase activity is the histidine 267. Isoleucine 452 contacts (6R)-10-formyltetrahydrofolate. Phenylalanine 541 is a binding site for 5-amino-1-(5-phospho-beta-D-ribosyl)imidazole-4-carboxamide. (6R)-10-formyltetrahydrofolate is bound by residues aspartate 546 and 565–566 (SA). Residue arginine 588 coordinates 5-amino-1-(5-phospho-beta-D-ribosyl)imidazole-4-carboxamide.

This sequence belongs to the PurH family. Homodimer. Associates with internalized INSR complexes on Golgi/endosomal membranes. Interacts with INSR; ATIC together with PRKAA2/AMPK2 and HACD3/PTPLAD1 is proposed to be part of a signaling network regulating INSR autophosphorylation and endocytosis.

The protein resides in the cytoplasm. The protein localises to the cytosol. The catalysed reaction is (6R)-10-formyltetrahydrofolate + 5-amino-1-(5-phospho-beta-D-ribosyl)imidazole-4-carboxamide = 5-formamido-1-(5-phospho-D-ribosyl)imidazole-4-carboxamide + (6S)-5,6,7,8-tetrahydrofolate. The enzyme catalyses 10-formyldihydrofolate + 5-amino-1-(5-phospho-beta-D-ribosyl)imidazole-4-carboxamide = 5-formamido-1-(5-phospho-D-ribosyl)imidazole-4-carboxamide + 7,8-dihydrofolate. It carries out the reaction IMP + H2O = 5-formamido-1-(5-phospho-D-ribosyl)imidazole-4-carboxamide. The protein operates within purine metabolism; IMP biosynthesis via de novo pathway; 5-formamido-1-(5-phospho-D-ribosyl)imidazole-4-carboxamide from 5-amino-1-(5-phospho-D-ribosyl)imidazole-4-carboxamide (10-formyl THF route): step 1/1. It participates in purine metabolism; IMP biosynthesis via de novo pathway; IMP from 5-formamido-1-(5-phospho-D-ribosyl)imidazole-4-carboxamide: step 1/1. AMP and XMP inhibit AICAR formyltransferase activity. Functionally, bifunctional enzyme that catalyzes the last two steps of purine biosynthesis. Acts as a transformylase that incorporates a formyl group to the AMP analog AICAR (5-amino-1-(5-phospho-beta-D-ribosyl)imidazole-4-carboxamide) to produce the intermediate formyl-AICAR (FAICAR). Can use both 10-formyldihydrofolate and 10-formyltetrahydrofolate as the formyl donor in this reaction. Also catalyzes the cyclization of FAICAR to inosine monophosphate (IMP). Promotes insulin receptor/INSR autophosphorylation and is involved in INSR internalization. This chain is Bifunctional purine biosynthesis protein ATIC (ATIC), found in Pongo abelii (Sumatran orangutan).